Here is a 20-residue protein sequence, read N- to C-terminus: Protein PR-L2 (20 aa).

The interval 1-20 (SVFAFENEQSSTIAPARLYK) is disordered.

Belongs to the BetVI family.

The protein is Protein PR-L2 of Lupinus luteus (European yellow lupine).